A 179-amino-acid chain; its full sequence is ATP synthase subunit delta (179 aa).

It belongs to the ATPase delta chain family. In terms of assembly, F-type ATPases have 2 components, F(1) - the catalytic core - and F(0) - the membrane proton channel. F(1) has five subunits: alpha(3), beta(3), gamma(1), delta(1), epsilon(1). F(0) has three main subunits: a(1), b(2) and c(10-14). The alpha and beta chains form an alternating ring which encloses part of the gamma chain. F(1) is attached to F(0) by a central stalk formed by the gamma and epsilon chains, while a peripheral stalk is formed by the delta and b chains.

Its subcellular location is the cell membrane. Functionally, f(1)F(0) ATP synthase produces ATP from ADP in the presence of a proton or sodium gradient. F-type ATPases consist of two structural domains, F(1) containing the extramembraneous catalytic core and F(0) containing the membrane proton channel, linked together by a central stalk and a peripheral stalk. During catalysis, ATP synthesis in the catalytic domain of F(1) is coupled via a rotary mechanism of the central stalk subunits to proton translocation. This protein is part of the stalk that links CF(0) to CF(1). It either transmits conformational changes from CF(0) to CF(1) or is implicated in proton conduction. In Listeria innocua serovar 6a (strain ATCC BAA-680 / CLIP 11262), this protein is ATP synthase subunit delta.